The sequence spans 181 residues: ATP synthase subunit delta (181 aa).

This sequence belongs to the ATPase delta chain family. As to quaternary structure, F-type ATPases have 2 components, F(1) - the catalytic core - and F(0) - the membrane proton channel. F(1) has five subunits: alpha(3), beta(3), gamma(1), delta(1), epsilon(1). F(0) has three main subunits: a(1), b(2) and c(10-14). The alpha and beta chains form an alternating ring which encloses part of the gamma chain. F(1) is attached to F(0) by a central stalk formed by the gamma and epsilon chains, while a peripheral stalk is formed by the delta and b chains.

The protein localises to the cell inner membrane. Its function is as follows. F(1)F(0) ATP synthase produces ATP from ADP in the presence of a proton or sodium gradient. F-type ATPases consist of two structural domains, F(1) containing the extramembraneous catalytic core and F(0) containing the membrane proton channel, linked together by a central stalk and a peripheral stalk. During catalysis, ATP synthesis in the catalytic domain of F(1) is coupled via a rotary mechanism of the central stalk subunits to proton translocation. This protein is part of the stalk that links CF(0) to CF(1). It either transmits conformational changes from CF(0) to CF(1) or is implicated in proton conduction. In Hyphomonas neptunium (strain ATCC 15444), this protein is ATP synthase subunit delta.